The sequence spans 112 residues: DNA-binding protein Bv3F (112 aa).

Residues 65-92 are disordered; it reads KRNSKRMSTVPKYRDPATGKTWSGRGRQ. 2 DNA-binding regions span residues 89–94 and 89–95; these read RGRQPA and RGRQPAW.

Belongs to the histone-like protein H-NS family. In terms of assembly, homodimer that oligomerizes on DNA into higher-order complexes that form bridges between disparate regions of DNA compacting it.

It localises to the cytoplasm. Its subcellular location is the nucleoid. In terms of biological role, a DNA-binding protein implicated in transcriptional repression and chromosome organization and compaction. Binds in the minor groove of AT-rich DNA. Binds nucleation sites in AT-rich DNA and bridges them, forming higher-order nucleoprotein complexes and condensing the chromosome. As many horizontally transferred genes are AT-rich, it plays a central role in silencing foreign genes. This chain is DNA-binding protein Bv3F, found in Burkholderia vietnamiensis (strain G4 / LMG 22486) (Burkholderia cepacia (strain R1808)).